We begin with the raw amino-acid sequence, 277 residues long: Energy-coupling factor transporter ATP-binding protein EcfA1 (277 aa).

Residues Val5–Asp242 enclose the ABC transporter domain. Residue Gly41–Ser48 participates in ATP binding.

This sequence belongs to the ABC transporter superfamily. Energy-coupling factor EcfA family. Forms a stable energy-coupling factor (ECF) transporter complex composed of 2 membrane-embedded substrate-binding proteins (S component), 2 ATP-binding proteins (A component) and 2 transmembrane proteins (T component).

Its subcellular location is the cell membrane. Functionally, ATP-binding (A) component of a common energy-coupling factor (ECF) ABC-transporter complex. Unlike classic ABC transporters this ECF transporter provides the energy necessary to transport a number of different substrates. The chain is Energy-coupling factor transporter ATP-binding protein EcfA1 from Clostridioides difficile (strain 630) (Peptoclostridium difficile).